The following is a 272-amino-acid chain: Deaminated glutathione amidase (272 aa).

In terms of domain architecture, CN hydrolase spans 1-253 (MKPYLAAALQ…PGLAIAEINP (253 aa)). Glu-43 acts as the Proton acceptor in catalysis. The active-site Proton donor is Lys-115. Cys-158 acts as the Nucleophile in catalysis.

It belongs to the carbon-nitrogen hydrolase superfamily. NIT1/NIT2 family.

It catalyses the reaction N-(4-oxoglutaryl)-L-cysteinylglycine + H2O = L-cysteinylglycine + 2-oxoglutarate. Hydrolyzes deaminated glutathione (dGSH, 2-oxoglutaramate) to alpha-ketoglutarate (alpha-KG) and cysteinylglycine (specific activity 7.77 umol/min/mg), hydrolyzes alpha-ketoglutaramate (a-KGM, specific activity 2.13 umol/min/mg), has no activity on glutathione or L-glutamine. May function as a metabolite repair enzyme. The chain is Deaminated glutathione amidase from Synechocystis sp. (strain PCC 6803 / GT-S).